Here is a 390-residue protein sequence, read N- to C-terminus: S-adenosylmethionine synthase 4 (390 aa).

Mg(2+) is bound at residue Glu9. Position 15 (His15) interacts with ATP. Position 43 (Glu43) interacts with K(+). L-methionine contacts are provided by Glu56 and Gln99. Residues 167-169 (DGK), 235-238 (SGRF), Asp246, 252-253 (RK), Ala269, Lys273, and Lys277 each bind ATP. Asp246 is a binding site for L-methionine. Lys277 is an L-methionine binding site.

The protein belongs to the AdoMet synthase family. Homotetramer. The cofactor is Mn(2+). Mg(2+) serves as cofactor. It depends on Co(2+) as a cofactor. K(+) is required as a cofactor. As to expression, mostly expressed in flowers, seedpods and roots, and, to a lower extent, in stems and leaves.

It localises to the cytoplasm. It catalyses the reaction L-methionine + ATP + H2O = S-adenosyl-L-methionine + phosphate + diphosphate. It participates in amino-acid biosynthesis; S-adenosyl-L-methionine biosynthesis; S-adenosyl-L-methionine from L-methionine: step 1/1. Functionally, catalyzes the formation of S-adenosylmethionine from methionine and ATP. The reaction comprises two steps that are both catalyzed by the same enzyme: formation of S-adenosylmethionine (AdoMet) and triphosphate, and subsequent hydrolysis of the triphosphate. The protein is S-adenosylmethionine synthase 4 (MSAMS4) of Brassica juncea (Indian mustard).